The primary structure comprises 487 residues: Glutamate mutase epsilon subunit (487 aa).

R62 provides a ligand contact to L-glutamate. Residue G64 coordinates adenosylcob(III)alamin. An L-glutamate-binding site is contributed by R96. N119 contributes to the adenosylcob(III)alamin binding site. L-glutamate is bound by residues 145 to 146 (RH), E167, and Y173. Residue P176 coordinates adenosylcob(III)alamin. Y177 provides a ligand contact to L-glutamate. Residues F289, K318, and E322 each contribute to the adenosylcob(III)alamin site. Positions 465–487 (SDGKLIGRPGGDNSPAGGASDAD) are disordered.

It belongs to the methylaspartate mutase GlmE subunit family. Heterotetramer composed of 2 epsilon subunits (GlmE) and 2 sigma subunits (GlmS). GlmE exists as a homodimer and GlmS as a monomer. The cofactor is adenosylcob(III)alamin.

The catalysed reaction is (2S,3S)-3-methyl-L-aspartate = L-glutamate. The protein operates within amino-acid degradation; L-glutamate degradation via mesaconate pathway; acetate and pyruvate from L-glutamate: step 1/4. Catalyzes the carbon skeleton rearrangement of L-glutamate to L-threo-3-methylaspartate ((2S,3S)-3-methylaspartate). The polypeptide is Glutamate mutase epsilon subunit (Haloarcula marismortui (strain ATCC 43049 / DSM 3752 / JCM 8966 / VKM B-1809) (Halobacterium marismortui)).